A 76-amino-acid polypeptide reads, in one-letter code: uncharacterized protein (76 aa).

EF-hand domains lie at 9–44 (EMDE…LGEN) and 43–76 (ENLT…IHIS).

Its subcellular location is the cytoplasm. The protein resides in the nucleus. This is an uncharacterized protein from Schizosaccharomyces pombe (strain 972 / ATCC 24843) (Fission yeast).